A 175-amino-acid polypeptide reads, in one-letter code: Dof zinc finger protein DOF1.5 (175 aa).

Residues 29–57 (EEQQQQQQPELQATTAVRSPSSDLTAEKR) are disordered. Polar residues predominate over residues 37 to 52 (PELQATTAVRSPSSDL). The segment at 62 to 116 (IPCPRCKSMETKFCYFNNYNVNQPRHFCKGCQRYWTAGGALRNVPVGAGRRKSKP) adopts a Dof-type zinc-finger fold. Zn(2+) is bound by residues cysteine 64, cysteine 67, cysteine 89, and cysteine 92. The Nuclear localization signal signature appears at 162-168 (PVKRLRC).

The protein resides in the nucleus. Transcription factor that binds specifically to a 5'-AA[AG]G-3' consensus core sequence. Acts as a negative regulator in the phytochrome-mediated light responses. Controls phyB-mediated end-of-day response and the phyA-mediated anthocyanin accumulation. Not involved in direct flowering time regulation. In Arabidopsis thaliana (Mouse-ear cress), this protein is Dof zinc finger protein DOF1.5 (DOF1.5).